The following is a 190-amino-acid chain: CD70 antigen (190 aa).

Residues 1–17 are Cytoplasmic-facing; sequence MEEEGSGCNVPRLPWAS. A helical transmembrane segment spans residues 18–38; sequence ILRAALLLLLIGMVIYCFLCG. Residues 39-190 lie on the Extracellular side of the membrane; sequence QRFTQQQLDS…TFFGVQLVRP (152 aa). The region spanning 52 to 188 is the THD domain; that stretch reads DLAELLLNHT…DETFFGVQLV (137 aa). N-linked (GlcNAc...) asparagine glycosylation is found at N59 and N110. Intrachain disulfides connect C111–C148 and C130–C165. N-linked (GlcNAc...) asparagine glycosylation occurs at N167.

Belongs to the tumor necrosis factor family. As to quaternary structure, homotrimer. N-glycosylated.

It is found in the cell membrane. Expressed at the plasma membrane of B cells, it is the ligand of the CD27 receptor which is specifically expressed at the surface of T cells. The CD70-CD27 signaling pathway mediates antigen-specific T cell activation and expansion which in turn provides immune surveillance of B cells. This Sus scrofa (Pig) protein is CD70 antigen.